The following is a 140-amino-acid chain: uncharacterized protein (140 aa).

A run of 14 repeats spans residues 1–10 (MFARLCPVSE), 11–20 (TFGRLCPVSE), 21–30 (TFARLCPVSE), 31–40 (TFARLCPVSE), 41–50 (TFARLCPVSE), 51–60 (TFGRLCPVSE), 61–70 (MFGRLSPVSE), 71–80 (TFGRLCPVSE), 81–90 (TFGRLCPVSE), 91–100 (MFARLCPVSE), 101–110 (TFGRLSPVSE), 111–120 (MFGRLCPVSE), 121–130 (MFGRLCPVSE), and 131–140 (MFGRLCPVIT). Positions 1 to 140 (MFARLCPVSE…MFGRLCPVIT (140 aa)) are 14 X 10 AA tandem repeats of [MT]-F-[AG]-R-L-[CS]-P-V-[SI]-[ET].

This is an uncharacterized protein from Homo sapiens (Human).